The following is an 881-amino-acid chain: MAGAAPRVRYLAGFCCPLGGLAAGKPRVLCHEAEVFLSTGSELVYVYDQEGGLLTAAFRFPDQVWHLELLAPRRLLYALCARRGLYCLSLDHPGRSRSTSQDDRDSEDGDQPSPVIPVDPDACILPDAALCAFTLLDSVLVTLVQGPARWKMQLFEQPCPGEDPRPGGQIGEVELSSYTPPAGVPGKPAAPHFLPVLCSVSPSGSRVPHDLLGGSGGFTLEDALFGLLFGADATLLQSPVVLCGLPDGQLCCVILKALVTSRSAPGDPNALVKILHHLEEPVIFIGALKTEPQAAEAAENFLPDEDVHCDCLVAFGHHGRMLAIKASWDESGKLVPELREYCLPGPVLCAACGGGGRVYHSTPSDLCVVDLSRGSTPLGPEQPEEGPGGLPPMLCPASLNICSVVSLSASPRTHEGGTKLLALSAKGRLMTCSLDLDSEMPGPARMTTESAGQKIKELLSGIGNISERVSFLKKAVDQRNKALTSLNEAMNVSCALLSSGTGPRPISCTTSTTWSRLQTQDVLMATCVLENSSSFSLDQGWTLCIQVLTSSCALDLDSACSAITYTIPVDQLGPGARREVTLPLGPGENGGLDLPVTVSCTLFYSLREVVGGALAPSDSEDPFLDECPSDVLPEQEGVCLPLSRHTVDMLQCLRFPGLAPPHTRAPSPLGPTRDPVATFLETCREPGSQPAGPASLRAEYLPPSVASIKVSAELLRAALKDGHSGVPLCCATLQWLLAENAAVDVVRARALSSIQGVAPDGANVHLIVREVAMTDLCPAGPIQAVEIQVESSSLADICRAHHAVVGRMQTMVTEQATQGSSAPDLRVQYLRQIHANHETLLREVQTLRDRLCTEDEASSCATAQRLLQVYRQLRHPSLILL.

A disordered region spans residues 94-119 (GRSRSTSQDDRDSEDGDQPSPVIPVD). The residue at position 667 (serine 667) is a Phosphoserine.

Belongs to the multisubunit FA complex composed of FANCA, FANCB, FANCC, FANCE, FANCF, FANCG, FANCL/PHF9, FANCM, FAAP24 and FAAP100. Forms a subcomplex with FANCB and FANCL.

Its subcellular location is the nucleus. Plays a role in Fanconi anemia-associated DNA damage response network. Regulates FANCD2 monoubiquitination and the stability of the FA core complex. Induces chromosomal instability as well as hypersensitivity to DNA cross-linking agents, when repressed. The chain is Fanconi anemia core complex-associated protein 100 from Homo sapiens (Human).